The sequence spans 426 residues: MDTRIKRIIAREILDSRGNPTVEVDITLNNGIRGRAACPSGASTGIHEAVERRDGEKRFGGKGVQGAVQAVMDIISPKLLGRDALEQKSIDSVMIELDGTPNKAKLGANAILTVSMAVARAAANSEDVLLSEYLGPKSTLMPVPCMNIMNGGAHANWQGSDFQEYMIAPVGAPDYPEAVRWGCEVYHSLKSVLKKKGLSTGVGDEGGFAPIVPSNLEPASLIVHAIEEAGYIPGKDIALVLDPASSGFYKDGKYTLKTEKKVLTSEEMTDYYEDMIRTYPIISIEDGLAEDDWEGFAFMTKRLGNTIQIVGDDIFVTNPERIHRGLKEKTANAVLIKLNQIGTVTETIDAIRLAQKAGWGTMVSHRSGETCDSFIADLTVALGCGQLKTGAPCRGERVEKYNQLLRINEFLGDKARYAGRQAFNSA.

Q163 provides a ligand contact to (2R)-2-phosphoglycerate. E205 functions as the Proton donor in the catalytic mechanism. Residues D242, E285, and D312 each contribute to the Mg(2+) site. Residues K337, R366, S367, and K388 each coordinate (2R)-2-phosphoglycerate. K337 (proton acceptor) is an active-site residue.

The protein belongs to the enolase family. Mg(2+) serves as cofactor.

The protein localises to the cytoplasm. It is found in the secreted. Its subcellular location is the cell surface. It carries out the reaction (2R)-2-phosphoglycerate = phosphoenolpyruvate + H2O. The protein operates within carbohydrate degradation; glycolysis; pyruvate from D-glyceraldehyde 3-phosphate: step 4/5. Catalyzes the reversible conversion of 2-phosphoglycerate (2-PG) into phosphoenolpyruvate (PEP). It is essential for the degradation of carbohydrates via glycolysis. In Methanospirillum hungatei JF-1 (strain ATCC 27890 / DSM 864 / NBRC 100397 / JF-1), this protein is Enolase 2.